We begin with the raw amino-acid sequence, 121 residues long: Large ribosomal subunit protein uL14c (121 aa).

This sequence belongs to the universal ribosomal protein uL14 family. As to quaternary structure, part of the 50S ribosomal subunit.

It is found in the plastid. It localises to the chloroplast. In terms of biological role, binds to 23S rRNA. This chain is Large ribosomal subunit protein uL14c, found in Phaeodactylum tricornutum (strain CCAP 1055/1).